The sequence spans 238 residues: Probable xyloglucan-specific endo-beta-1,4-glucanase A (238 aa).

The signal sequence occupies residues 1–18 (MKFSLSVALSLAAATAQA). 2 N-linked (GlcNAc...) asparagine glycosylation sites follow: asparagine 106 and asparagine 171.

The protein belongs to the glycosyl hydrolase 12 (cellulase H) family.

Its subcellular location is the secreted. It catalyses the reaction xyloglucan + H2O = xyloglucan oligosaccharides.. Its function is as follows. Catalyzes endohydrolysis of 1,4-beta-D-glucosidic linkages in xyloglucan with retention of the beta-configuration of the glycosyl residues. Specific for xyloglucan and does not hydrolyze other cell wall components. This chain is Probable xyloglucan-specific endo-beta-1,4-glucanase A (xgeA), found in Neosartorya fischeri (strain ATCC 1020 / DSM 3700 / CBS 544.65 / FGSC A1164 / JCM 1740 / NRRL 181 / WB 181) (Aspergillus fischerianus).